Reading from the N-terminus, the 475-residue chain is MSPQTETKASVGFKAGVKDYKLTYYTPDYETKDTDILAAFRVTPQPGVPPEEAGAAVAAESSTGTWTTVWTDGLTSLDRYKGRCYHIEPVAGEETQFIAYVAYPLDLFEEGSVTNMFTSIVGNVFGFKALRALRLEDLRIPVAYCKTFQGPPHGIQVERDKLNKYGRPLLGCTIKPKLGLSAKNYGRAVYECLRGGLDFTKDDENVNSQPFMRWRDRFLFCAEAIFKAQSETGEIKGHYLNATAGTCEEMMKRAVFARELGVPIVMHDYLTGGFTANTTLAHYCRDNGLLLHIHRAMHAVIDRQKNHGMHFRVLAKALRMSGGDHIHAGTVVGKLEGERDITLGFVDLLRDDYIEKDRARGIYFTQDWVSLPGVLPVASGGIHVWHMPALTEIFGDDSVLQFGGGTLGHPWGNAPGAVANRVALEACVQARNEGRDLAREGNEIIRNASKWSPELAAACEVWKEIKFEFQAMDTL.

Lys14 carries the post-translational modification N6,N6,N6-trimethyllysine. 2 residues coordinate substrate: Asn123 and Thr173. Lys175 serves as the catalytic Proton acceptor. Residue Lys177 participates in substrate binding. Positions 201, 203, and 204 each coordinate Mg(2+). Lys201 carries the N6-carboxylysine modification. The active-site Proton acceptor is His294. 3 residues coordinate substrate: Arg295, His327, and Ser379.

The protein belongs to the RuBisCO large chain family. Type I subfamily. Heterohexadecamer of 8 large chains and 8 small chains; disulfide-linked. The disulfide link is formed within the large subunit homodimers. Requires Mg(2+) as cofactor. In terms of processing, the disulfide bond which can form in the large chain dimeric partners within the hexadecamer appears to be associated with oxidative stress and protein turnover.

It localises to the plastid. Its subcellular location is the chloroplast. The catalysed reaction is 2 (2R)-3-phosphoglycerate + 2 H(+) = D-ribulose 1,5-bisphosphate + CO2 + H2O. It carries out the reaction D-ribulose 1,5-bisphosphate + O2 = 2-phosphoglycolate + (2R)-3-phosphoglycerate + 2 H(+). Functionally, ruBisCO catalyzes two reactions: the carboxylation of D-ribulose 1,5-bisphosphate, the primary event in carbon dioxide fixation, as well as the oxidative fragmentation of the pentose substrate in the photorespiration process. Both reactions occur simultaneously and in competition at the same active site. The polypeptide is Ribulose bisphosphate carboxylase large chain (Actinidia chinensis (Kiwi)).